Consider the following 409-residue polypeptide: Argininosuccinate synthase (409 aa).

Residues 11–19 (AYSGGLDTS) and alanine 38 each bind ATP. Positions 91 and 96 each coordinate L-citrulline. Residue glycine 121 participates in ATP binding. L-aspartate contacts are provided by threonine 123, asparagine 127, and aspartate 128. Asparagine 127 contributes to the L-citrulline binding site. Positions 131, 182, 191, 267, and 279 each coordinate L-citrulline.

This sequence belongs to the argininosuccinate synthase family. Type 1 subfamily. In terms of assembly, homotetramer.

The protein resides in the cytoplasm. The catalysed reaction is L-citrulline + L-aspartate + ATP = 2-(N(omega)-L-arginino)succinate + AMP + diphosphate + H(+). Its pathway is amino-acid biosynthesis; L-arginine biosynthesis; L-arginine from L-ornithine and carbamoyl phosphate: step 2/3. The protein is Argininosuccinate synthase of Nitrobacter hamburgensis (strain DSM 10229 / NCIMB 13809 / X14).